Here is a 43-residue protein sequence, read N- to C-terminus: Defensin (43 aa).

3 cysteine pairs are disulfide-bonded: cysteine 3–cysteine 34, cysteine 20–cysteine 39, and cysteine 24–cysteine 41.

The protein localises to the secreted. In terms of biological role, antibacterial peptide. Affects Gram-negative bacteria including methicillin-resistant Staphylococcus aureus. This chain is Defensin, found in Trypoxylus dichotomus (Japanese rhinoceros beetle).